Reading from the N-terminus, the 351-residue chain is Methionine import ATP-binding protein MetN (351 aa).

The 246-residue stretch at 4–249 (VQLDHVSVTF…PKAELTQKFV (246 aa)) folds into the ABC transporter domain. ATP is bound at residue 41–48 (GFSGAGKS).

The protein belongs to the ABC transporter superfamily. Methionine importer (TC 3.A.1.24) family. The complex is composed of two ATP-binding proteins (MetN), two transmembrane proteins (MetI) and a solute-binding protein (MetQ).

Its subcellular location is the cell membrane. It catalyses the reaction L-methionine(out) + ATP + H2O = L-methionine(in) + ADP + phosphate + H(+). The catalysed reaction is D-methionine(out) + ATP + H2O = D-methionine(in) + ADP + phosphate + H(+). In terms of biological role, part of the ABC transporter complex MetNIQ involved in methionine import. Responsible for energy coupling to the transport system. The protein is Methionine import ATP-binding protein MetN of Lactobacillus delbrueckii subsp. bulgaricus (strain ATCC BAA-365 / Lb-18).